The following is a 22-amino-acid chain: Myofibril-bound serine protease (22 aa).

The protein belongs to the peptidase S1 family. Detected in muscle (at protein level).

Its subcellular location is the cytoplasm. Inhibited by the serine protease inhibitors, antipain, aprotinin, DFP, leupeptin, STI and TLCK, and by the cysteine proteinase inhibitors DTNB and to a lesser extent E-64. Not inhibited by the metalloproteinase inhibitor EDTA. In terms of biological role, serine protease that selectively cleaves Arg-|-Xaa bonds. The sequence is that of Myofibril-bound serine protease from Cyprinus carpio (Common carp).